We begin with the raw amino-acid sequence, 430 residues long: Probable WRKY transcription factor 14 (430 aa).

A DNA-binding region (WRKY) is located at residues 211–277; it reads SGEVVPSDLW…YTSEHNHPWP (67 aa). The disordered stretch occupies residues 283–366; sequence LAGSTRSSTS…APYRPELHDH (84 aa). Residues 286-306 show a composition bias toward low complexity; sequence STRSSTSSSSNPNPSKPSTAN. The segment covering 307–319 has biased composition (polar residues); the sequence is VNSSSIGSQNTIY. The segment covering 340–354 has biased composition (acidic residues); it reads GDDMELENVDDDDDN.

The protein belongs to the WRKY group II-e family.

The protein resides in the nucleus. In terms of biological role, transcription factor. Interacts specifically with the W box (5'-(T)TGAC[CT]-3'), a frequently occurring elicitor-responsive cis-acting element. This is Probable WRKY transcription factor 14 (WRKY14) from Arabidopsis thaliana (Mouse-ear cress).